A 597-amino-acid chain; its full sequence is Alpha-1,2-mannosyltransferase MNN2 (597 aa).

The Cytoplasmic portion of the chain corresponds to 1 to 6; it reads MIAKQK. The chain crosses the membrane as a helical span at residues 7-27; sequence IKILIGVIIVIATYHFIVSSN. Residues 28–597 are Extracellular-facing; that stretch reads VRSKDLSDLV…ETAEIPTVVS (570 aa). A disordered region spans residues 39-89; that stretch reads LGSSDKSTTENERPKNNIVTNNRLDNPPNEDIPHAEPDSPPQEPPKSGNKP. N-linked (GlcNAc...) asparagine glycosylation is present at asparagine 382.

This sequence belongs to the MNN1/MNT family. It depends on Mn(2+) as a cofactor.

The protein localises to the golgi apparatus membrane. It participates in protein modification; protein glycosylation. With respect to regulation, enzyme activity is regulated by iron. Alpha-1,2-mannosyltransferase required for cell wall integrity. Responsible for addition of the first alpha-1,2-linked mannose to form the branches on the mannan backbone of oligosaccharides. Addition of alpha-1,2-mannose is required for stabilization of the alpha-1,6-mannose backbone and hence regulates mannan fibril length; and is important for both immune recognition and virulence. Promotes iron uptake and usage along the endocytosis pathway under iron-limiting conditions. This Candida albicans (strain SC5314 / ATCC MYA-2876) (Yeast) protein is Alpha-1,2-mannosyltransferase MNN2 (MNN2).